Here is a 396-residue protein sequence, read N- to C-terminus: Digeranylgeranylglycerophospholipid reductase (396 aa).

Residues Gly14, Glu33, Cys44, Gly45, Gly47, Arg100, Ala124, Glu162, Asp283, Gly295, and Ile296 each contribute to the FAD site. Residues Lys338 and Val374 each coordinate a 2,3-bis-O-(geranylgeranyl)-sn-glycerol 1-phospholipid.

The protein belongs to the geranylgeranyl reductase family. DGGGPL reductase subfamily. FAD is required as a cofactor.

The catalysed reaction is 2,3-bis-O-(phytanyl)-sn-glycerol 1-phosphate + 8 NADP(+) = 2,3-bis-O-(geranylgeranyl)-sn-glycerol 1-phosphate + 8 NADPH + 8 H(+). It catalyses the reaction 2,3-bis-O-(phytanyl)-sn-glycerol 1-phosphate + 8 NAD(+) = 2,3-bis-O-(geranylgeranyl)-sn-glycerol 1-phosphate + 8 NADH + 8 H(+). It carries out the reaction a 2,3-bis-O-phytanyl-sn-glycerol 1-phospholipid + 8 A = a 2,3-bis-O-(geranylgeranyl)-sn-glycerol 1-phospholipid + 8 AH2. The enzyme catalyses CDP-2,3-bis-O-(geranylgeranyl)-sn-glycerol + 8 AH2 = CDP-2,3-bis-O-(phytanyl)-sn-glycerol + 8 A. The catalysed reaction is archaetidylserine + 8 AH2 = 2,3-bis-O-phytanyl-sn-glycero-3-phospho-L-serine + 8 A. Its pathway is membrane lipid metabolism; glycerophospholipid metabolism. Functionally, is involved in the reduction of 2,3-digeranylgeranylglycerophospholipids (unsaturated archaeols) into 2,3-diphytanylglycerophospholipids (saturated archaeols) in the biosynthesis of archaeal membrane lipids. Catalyzes the formation of archaetidic acid (2,3-di-O-phytanyl-sn-glyceryl phosphate) from 2,3-di-O-geranylgeranylglyceryl phosphate (DGGGP) via the hydrogenation of each double bond of the isoprenoid chains. Is also probably able to reduce double bonds of geranyl groups in CDP-2,3-bis-O-(geranylgeranyl)-sn-glycerol and archaetidylserine, thus acting at various stages in the biosynthesis of archaeal membrane lipids. This is Digeranylgeranylglycerophospholipid reductase from Thermoplasma volcanium (strain ATCC 51530 / DSM 4299 / JCM 9571 / NBRC 15438 / GSS1).